The chain runs to 357 residues: tRNA/tmRNA (uracil-C(5))-methyltransferase (357 aa).

S-adenosyl-L-methionine is bound by residues Q185, Y212, N217, E233, and D291. C316 (nucleophile) is an active-site residue. E350 acts as the Proton acceptor in catalysis.

The protein belongs to the class I-like SAM-binding methyltransferase superfamily. RNA M5U methyltransferase family. TrmA subfamily.

It carries out the reaction uridine(54) in tRNA + S-adenosyl-L-methionine = 5-methyluridine(54) in tRNA + S-adenosyl-L-homocysteine + H(+). The enzyme catalyses uridine(341) in tmRNA + S-adenosyl-L-methionine = 5-methyluridine(341) in tmRNA + S-adenosyl-L-homocysteine + H(+). Its function is as follows. Dual-specificity methyltransferase that catalyzes the formation of 5-methyluridine at position 54 (m5U54) in all tRNAs, and that of position 341 (m5U341) in tmRNA (transfer-mRNA). This is tRNA/tmRNA (uracil-C(5))-methyltransferase from Campylobacter hominis (strain ATCC BAA-381 / DSM 21671 / CCUG 45161 / LMG 19568 / NCTC 13146 / CH001A).